Here is a 127-residue protein sequence, read N- to C-terminus: Prefoldin subunit 6 (127 aa).

N-acetylalanine is present on Ala-2. Lys-21 is modified (N6-acetyllysine). Lys-66 is modified (N6-acetyllysine; alternate). Residue Lys-66 forms a Glycyl lysine isopeptide (Lys-Gly) (interchain with G-Cter in SUMO1); alternate linkage. Lys-66 participates in a covalent cross-link: Glycyl lysine isopeptide (Lys-Gly) (interchain with G-Cter in SUMO2); alternate.

It belongs to the prefoldin subunit beta family. Heterohexamer of two PFD-alpha type and four PFD-beta type subunits. Component of the PAQosome complex which is responsible for the biogenesis of several protein complexes and which consists of R2TP complex members RUVBL1, RUVBL2, RPAP3 and PIH1D1, URI complex members PFDN2, PFDN6, PDRG1, UXT and URI1 as well as ASDURF, POLR2E and DNAAF10/WDR92.

Its function is as follows. Binds specifically to cytosolic chaperonin (c-CPN) and transfers target proteins to it. Binds to nascent polypeptide chain and promotes folding in an environment in which there are many competing pathways for nonnative proteins. This chain is Prefoldin subunit 6 (Pfdn6), found in Mus musculus (Mouse).